We begin with the raw amino-acid sequence, 249 residues long: Aspartate/glutamate leucyltransferase (249 aa).

Belongs to the R-transferase family. Bpt subfamily.

The protein resides in the cytoplasm. It carries out the reaction N-terminal L-glutamyl-[protein] + L-leucyl-tRNA(Leu) = N-terminal L-leucyl-L-glutamyl-[protein] + tRNA(Leu) + H(+). The enzyme catalyses N-terminal L-aspartyl-[protein] + L-leucyl-tRNA(Leu) = N-terminal L-leucyl-L-aspartyl-[protein] + tRNA(Leu) + H(+). Its function is as follows. Functions in the N-end rule pathway of protein degradation where it conjugates Leu from its aminoacyl-tRNA to the N-termini of proteins containing an N-terminal aspartate or glutamate. This Brucella abortus (strain S19) protein is Aspartate/glutamate leucyltransferase.